The sequence spans 514 residues: Transcription termination factor Rho (514 aa).

The interval Glu25–Lys52 is disordered. The segment covering Asn35–His45 has biased composition (basic residues). In terms of domain architecture, Rho RNA-BD spans Leu141 to Asp216. Residues Gly259–Gly264, Arg271–Met276, and Arg302 contribute to the ATP site.

Belongs to the Rho family. As to quaternary structure, homohexamer. The homohexamer assembles into an open ring structure.

Functionally, facilitates transcription termination by a mechanism that involves Rho binding to the nascent RNA, activation of Rho's RNA-dependent ATPase activity, and release of the mRNA from the DNA template. In Rhodopirellula baltica (strain DSM 10527 / NCIMB 13988 / SH1), this protein is Transcription termination factor Rho.